The following is a 799-amino-acid chain: Ribonucleoside-diphosphate reductase large subunit (799 aa).

Residues T192, 207 to 208 (SC), G238, 408 to 412 (NLCAE), and 612 to 616 (PTAGT) contribute to the substrate site. C208 and C424 are disulfide-bonded. N408 acts as the Proton acceptor in catalysis. Residue C410 is the Cysteine radical intermediate of the active site. E412 acts as the Proton acceptor in catalysis. The interval 765-799 (PDSGDGVGGYKGGDEEPRSPEHAQCESPDRCLSCQ) is disordered. Positions 776–793 (GGDEEPRSPEHAQCESPD) are enriched in basic and acidic residues.

It belongs to the ribonucleoside diphosphate reductase large chain family. Heterotetramer composed of a homodimer of the large subunit (R1) and a homodimer of the small subunit (R2). Larger multisubunit protein complex are also active, composed of (R1)n(R2)n.

The catalysed reaction is a 2'-deoxyribonucleoside 5'-diphosphate + [thioredoxin]-disulfide + H2O = a ribonucleoside 5'-diphosphate + [thioredoxin]-dithiol. Functionally, ribonucleoside-diphosphate reductase holoenzyme provides the precursors necessary for viral DNA synthesis. Allows virus growth in non-dividing cells, as well as reactivation from latency in infected hosts. Catalyzes the biosynthesis of deoxyribonucleotides from the corresponding ribonucleotides. The chain is Ribonucleoside-diphosphate reductase large subunit from Equine herpesvirus 2 (strain 86/87) (EHV-2).